The primary structure comprises 315 residues: GPN-loop GTPase 2 (315 aa).

12–17 (GSGKST) contacts GTP. Positions 69 to 71 (GPN) match the Gly-Pro-Asn (GPN)-loop; involved in dimer interface motif. 172–175 (SKAD) contributes to the GTP binding site.

This sequence belongs to the GPN-loop GTPase family. Heterodimers with gpn1 or fet5/gpn3. Binds to RNA polymerase II (RNAPII).

It is found in the cytoplasm. It localises to the nucleus. Its function is as follows. Small GTPase required for proper nuclear import of RNA polymerase II and III (RNAPII and RNAPIII). May act at an RNAP assembly step prior to nuclear import. The protein is GPN-loop GTPase 2 of Schizosaccharomyces pombe (strain 972 / ATCC 24843) (Fission yeast).